We begin with the raw amino-acid sequence, 178 residues long: Large ribosomal subunit protein bL25 (178 aa).

Belongs to the bacterial ribosomal protein bL25 family. CTC subfamily. Part of the 50S ribosomal subunit; part of the 5S rRNA/L5/L18/L25 subcomplex. Contacts the 5S rRNA. Binds to the 5S rRNA independently of L5 and L18.

Functionally, this is one of the proteins that binds to the 5S RNA in the ribosome where it forms part of the central protuberance. The sequence is that of Large ribosomal subunit protein bL25 from Campylobacter lari (strain RM2100 / D67 / ATCC BAA-1060).